A 199-amino-acid chain; its full sequence is Transmembrane protein 9B (199 aa).

The signal sequence occupies residues 1-34 (MASLWCGNLLRLGSGLSMSCLALSVLLLAQLTGA). A glycan (N-linked (GlcNAc...) asparagine) is linked at Asn61. Residues 106 to 126 (IIIYLSILGLLLLYMVYLTLV) form a helical membrane-spanning segment. Phosphoserine is present on residues Ser143 and Ser190.

It belongs to the TMEM9 family. Post-translationally, N-glycosylated.

It localises to the lysosome membrane. It is found in the early endosome membrane. Its function is as follows. Enhances production of pro-inflammatory cytokines induced by TNF, IL1B, and TLR ligands. Has a role in TNF activation of both the NF-kappaB and MAPK pathways. This chain is Transmembrane protein 9B (Tmem9b), found in Mus musculus (Mouse).